Consider the following 162-residue polypeptide: MTDLYIDADACPVKAEAERVAVRHGVRMFLVSNGGIRPPAHPLVESIFVPEGPDVADMWIADRARTGDVVVTSDIPLAAKVVAAGALVVKPNGETLTTANIGNALATRDLMADLRSADPFRQGGGRTFSKADRSRFLDALERAMRKAQEAGRSASGGSEAGS.

It belongs to the UPF0178 family.

The sequence is that of UPF0178 protein Rsph17029_2512 from Cereibacter sphaeroides (strain ATCC 17029 / ATH 2.4.9) (Rhodobacter sphaeroides).